We begin with the raw amino-acid sequence, 192 residues long: Xanthine phosphoribosyltransferase (192 aa).

Xanthine-binding residues include L20 and N27. 128-132 (AHGEA) is a binding site for 5-phospho-alpha-D-ribose 1-diphosphate. K156 contacts xanthine.

The protein belongs to the purine/pyrimidine phosphoribosyltransferase family. Xpt subfamily. As to quaternary structure, homodimer.

It localises to the cytoplasm. It carries out the reaction XMP + diphosphate = xanthine + 5-phospho-alpha-D-ribose 1-diphosphate. The protein operates within purine metabolism; XMP biosynthesis via salvage pathway; XMP from xanthine: step 1/1. Converts the preformed base xanthine, a product of nucleic acid breakdown, to xanthosine 5'-monophosphate (XMP), so it can be reused for RNA or DNA synthesis. The protein is Xanthine phosphoribosyltransferase of Lactobacillus johnsonii (strain CNCM I-12250 / La1 / NCC 533).